The chain runs to 264 residues: Thymidylate synthase (264 aa).

DUMP is bound at residue R21. H51 is a (6R)-5,10-methylene-5,6,7,8-tetrahydrofolate binding site. 126 to 127 (RR) provides a ligand contact to dUMP. The active-site Nucleophile is C146. Residues 166–169 (RSAD), N177, and 207–209 (HLY) contribute to the dUMP site. D169 lines the (6R)-5,10-methylene-5,6,7,8-tetrahydrofolate pocket. (6R)-5,10-methylene-5,6,7,8-tetrahydrofolate is bound at residue A263.

This sequence belongs to the thymidylate synthase family. Bacterial-type ThyA subfamily. As to quaternary structure, homodimer.

The protein resides in the cytoplasm. The enzyme catalyses dUMP + (6R)-5,10-methylene-5,6,7,8-tetrahydrofolate = 7,8-dihydrofolate + dTMP. It functions in the pathway pyrimidine metabolism; dTTP biosynthesis. Catalyzes the reductive methylation of 2'-deoxyuridine-5'-monophosphate (dUMP) to 2'-deoxythymidine-5'-monophosphate (dTMP) while utilizing 5,10-methylenetetrahydrofolate (mTHF) as the methyl donor and reductant in the reaction, yielding dihydrofolate (DHF) as a by-product. This enzymatic reaction provides an intracellular de novo source of dTMP, an essential precursor for DNA biosynthesis. The polypeptide is Thymidylate synthase (Bartonella bacilliformis (strain ATCC 35685 / KC583 / Herrer 020/F12,63)).